The chain runs to 121 residues: UPF0102 protein Syncc9902_1284 (121 aa).

It belongs to the UPF0102 family.

In Synechococcus sp. (strain CC9902), this protein is UPF0102 protein Syncc9902_1284.